The sequence spans 332 residues: Phosphate acyltransferase (332 aa).

The protein belongs to the PlsX family. In terms of assembly, homodimer. Probably interacts with PlsY.

It is found in the cytoplasm. It catalyses the reaction a fatty acyl-[ACP] + phosphate = an acyl phosphate + holo-[ACP]. Its pathway is lipid metabolism; phospholipid metabolism. In terms of biological role, catalyzes the reversible formation of acyl-phosphate (acyl-PO(4)) from acyl-[acyl-carrier-protein] (acyl-ACP). This enzyme utilizes acyl-ACP as fatty acyl donor, but not acyl-CoA. The chain is Phosphate acyltransferase from Bacillus pumilus (strain SAFR-032).